The sequence spans 583 residues: Complement factor I (583 aa).

The first 18 residues, 1-18, serve as a signal peptide directing secretion; sequence MKLLHVFLLFLCFHLRFC. 17 disulfide bridges follow: cysteine 33/cysteine 255, cysteine 43/cysteine 54, cysteine 48/cysteine 59, cysteine 61/cysteine 93, cysteine 67/cysteine 86, cysteine 75/cysteine 106, cysteine 141/cysteine 181, cysteine 154/cysteine 214, cysteine 186/cysteine 196, cysteine 229/cysteine 247, cysteine 241/cysteine 256, cysteine 259/cysteine 271, cysteine 266/cysteine 284, cysteine 278/cysteine 293, cysteine 327/cysteine 453, cysteine 365/cysteine 381, and cysteine 373/cysteine 444. The Kazal-like domain occupies 55 to 108; sequence IEGTCVCKLPYQCPKNGTAVCATNRRSFPTYCQQKSLECLHPGTKFLNNGTCTA. N-linked (GlcNAc...) asparagine glycosylation occurs at asparagine 70. Asparagine 103 is a glycosylation site (N-linked (GlcNAc...) (complex) asparagine). Residues 114 to 212 enclose the SRCR domain; that stretch reads VSLKHGNTDS…TMGYQDFADV (99 aa). Asparagine 177 is a glycosylation site (N-linked (GlcNAc...) asparagine). LDL-receptor class A domains lie at 213 to 257 and 258 to 294; these read VCYT…LCCK and ACQG…VGCA. Ca(2+) is bound by residues lysine 239, aspartate 242, isoleucine 244, aspartate 246, aspartate 252, and glutamate 253. 6 residues coordinate Ca(2+): tyrosine 276, asparagine 279, glutamate 281, aspartate 283, aspartate 289, and glutamate 290. A Peptidase S1 domain is found at 340–574; it reads IVGGKRAQLG…YFDWISYHVG (235 aa). Active-site charge relay system residues include histidine 380 and aspartate 429. N-linked (GlcNAc...) asparagine glycosylation is found at asparagine 464 and asparagine 494. 3 cysteine pairs are disulfide-bonded: cysteine 467–cysteine 531, cysteine 495–cysteine 510, and cysteine 521–cysteine 550. The Charge relay system role is filled by serine 525. Asparagine 536 carries N-linked (GlcNAc...) asparagine glycosylation.

This sequence belongs to the peptidase S1 family. In terms of assembly, heterodimer of a light and heavy chains; disulfide-linked. The fully processed and mature protein circulates as a zymogen, and is allosterically activated by substrate-induced remodeling of the active site. Interacts with C3b. Interacts with complement factor H. As to quaternary structure, (Microbial infection) Interacts with Staphylococcus aureus clumping factor A/ClfA; this interaction enhances cleavage of C3b into iC3b by CFI. As to expression, expressed in the liver by hepatocytes. Also present in other cells such as monocytes, fibroblasts or keratinocytes.

It localises to the secreted. The protein localises to the extracellular space. It catalyses the reaction Inactivates complement subcomponents C3b, iC3b and C4b by proteolytic cleavage.. Trypsin-like serine protease that plays an essential role in regulating the immune response by controlling all complement pathways. Inhibits these pathways by cleaving three peptide bonds in the alpha-chain of C3b and two bonds in the alpha-chain of C4b thereby inactivating these proteins. Essential cofactors for these reactions include factor H and C4BP in the fluid phase and membrane cofactor protein/CD46 and CR1 on cell surfaces. The presence of these cofactors on healthy cells allows degradation of deposited C3b by CFI in order to prevent undesired complement activation, while in apoptotic cells or microbes, the absence of such cofactors leads to C3b-mediated complement activation and subsequent opsonization. This Homo sapiens (Human) protein is Complement factor I (CFI).